The primary structure comprises 355 residues: Uroporphyrinogen decarboxylase (355 aa).

Substrate is bound by residues 27-31, D78, Y155, T210, and H328; that span reads RQAGR.

This sequence belongs to the uroporphyrinogen decarboxylase family. In terms of assembly, homodimer.

It is found in the cytoplasm. It carries out the reaction uroporphyrinogen III + 4 H(+) = coproporphyrinogen III + 4 CO2. Its pathway is porphyrin-containing compound metabolism; protoporphyrin-IX biosynthesis; coproporphyrinogen-III from 5-aminolevulinate: step 4/4. Functionally, catalyzes the decarboxylation of four acetate groups of uroporphyrinogen-III to yield coproporphyrinogen-III. In Pseudomonas fluorescens (strain SBW25), this protein is Uroporphyrinogen decarboxylase.